Consider the following 201-residue polypeptide: Holliday junction branch migration complex subunit RuvA (201 aa).

The domain I stretch occupies residues Met-1–Ala-63. The domain II stretch occupies residues Asp-64–Gly-142. Residues Gly-143–Asn-153 are flexible linker. The domain III stretch occupies residues Asn-153–Leu-201.

Belongs to the RuvA family. In terms of assembly, homotetramer. Forms an RuvA(8)-RuvB(12)-Holliday junction (HJ) complex. HJ DNA is sandwiched between 2 RuvA tetramers; dsDNA enters through RuvA and exits via RuvB. An RuvB hexamer assembles on each DNA strand where it exits the tetramer. Each RuvB hexamer is contacted by two RuvA subunits (via domain III) on 2 adjacent RuvB subunits; this complex drives branch migration. In the full resolvosome a probable DNA-RuvA(4)-RuvB(12)-RuvC(2) complex forms which resolves the HJ.

The protein resides in the cytoplasm. Functionally, the RuvA-RuvB-RuvC complex processes Holliday junction (HJ) DNA during genetic recombination and DNA repair, while the RuvA-RuvB complex plays an important role in the rescue of blocked DNA replication forks via replication fork reversal (RFR). RuvA specifically binds to HJ cruciform DNA, conferring on it an open structure. The RuvB hexamer acts as an ATP-dependent pump, pulling dsDNA into and through the RuvAB complex. HJ branch migration allows RuvC to scan DNA until it finds its consensus sequence, where it cleaves and resolves the cruciform DNA. The polypeptide is Holliday junction branch migration complex subunit RuvA (Bacteroides fragilis (strain ATCC 25285 / DSM 2151 / CCUG 4856 / JCM 11019 / LMG 10263 / NCTC 9343 / Onslow / VPI 2553 / EN-2)).